The primary structure comprises 346 residues: 2,5-dichlorohydroquinone reductive dechlorinase (346 aa).

The GST N-terminal domain maps to 43-154; sequence PRFELFHFVF…YLCDALSGGT (112 aa). The GST C-terminal domain maps to 189–335; it reads DRRPESMQAV…AIIQWPGHPP (147 aa).

The protein belongs to the GST superfamily.

It carries out the reaction 2,5-dichlorohydroquinone + 2 glutathione = chlorohydroquinone + glutathione disulfide + chloride + H(+). The catalysed reaction is chlorohydroquinone + 2 glutathione = hydroquinone + glutathione disulfide + chloride + H(+). The protein operates within xenobiotic degradation; gamma-hexachlorocyclohexane degradation. Functionally, catalyzes the degradation of 2,5-dichlorohydroquinone (2,5-DCHQ) into hydroquinone (HQ) via chlorohydroquinone (CHQ). The polypeptide is 2,5-dichlorohydroquinone reductive dechlorinase (Sphingobium indicum (strain DSM 16412 / CCM 7286 / MTCC 6364 / B90A)).